Consider the following 736-residue polypeptide: Elongation factor 2 (736 aa).

A tr-type G domain is found at 18-234 (TRVRNIGIIA…VIDAYTASDK (217 aa)). GTP contacts are provided by residues 27–34 (AHVDHGKT), 93–97 (DTPGH), and 147–150 (NKVD). His603 carries the post-translational modification Diphthamide.

It belongs to the TRAFAC class translation factor GTPase superfamily. Classic translation factor GTPase family. EF-G/EF-2 subfamily.

It is found in the cytoplasm. Functionally, catalyzes the GTP-dependent ribosomal translocation step during translation elongation. During this step, the ribosome changes from the pre-translocational (PRE) to the post-translocational (POST) state as the newly formed A-site-bound peptidyl-tRNA and P-site-bound deacylated tRNA move to the P and E sites, respectively. Catalyzes the coordinated movement of the two tRNA molecules, the mRNA and conformational changes in the ribosome. The protein is Elongation factor 2 (fusA) of Saccharolobus solfataricus (strain ATCC 35092 / DSM 1617 / JCM 11322 / P2) (Sulfolobus solfataricus).